The following is a 120-amino-acid chain: Large ribosomal subunit protein bL19 (120 aa).

The protein belongs to the bacterial ribosomal protein bL19 family.

In terms of biological role, this protein is located at the 30S-50S ribosomal subunit interface and may play a role in the structure and function of the aminoacyl-tRNA binding site. This chain is Large ribosomal subunit protein bL19 (rplS), found in Nostoc sp. (strain PCC 7120 / SAG 25.82 / UTEX 2576).